The chain runs to 142 residues: Large ribosomal subunit protein mL43 (142 aa).

This sequence belongs to the mitochondrion-specific ribosomal protein mL43 family. Component of the mitochondrial large ribosomal subunit. Mature mitochondrial ribosomes consist of a small (37S) and a large (54S) subunit. The 37S subunit contains at least 33 different proteins and 1 molecule of RNA (15S). The 54S subunit contains at least 45 different proteins and 1 molecule of RNA (21S).

The protein resides in the mitochondrion. The chain is Large ribosomal subunit protein mL43 (MRPL51) from Eremothecium gossypii (strain ATCC 10895 / CBS 109.51 / FGSC 9923 / NRRL Y-1056) (Yeast).